The chain runs to 937 residues: Aconitate hydratase A (937 aa).

Positions 439, 505, and 508 each coordinate [4Fe-4S] cluster. The segment at 898–921 is disordered; it reads KKESKSTQSTTSKGCGSADTSSET.

This sequence belongs to the aconitase/IPM isomerase family. As to quaternary structure, monomer. The cofactor is [4Fe-4S] cluster.

The enzyme catalyses citrate = D-threo-isocitrate. The catalysed reaction is (2S,3R)-3-hydroxybutane-1,2,3-tricarboxylate = 2-methyl-cis-aconitate + H2O. The protein operates within carbohydrate metabolism; tricarboxylic acid cycle; isocitrate from oxaloacetate: step 2/2. It participates in organic acid metabolism; propanoate degradation. In terms of biological role, involved in the catabolism of short chain fatty acids (SCFA) via the tricarboxylic acid (TCA)(acetyl degradation route) and probably the 2-methylcitrate cycle I (propionate degradation route). Catalyzes the reversible isomerization of citrate to isocitrate via cis-aconitate. Could catalyze the hydration of 2-methyl-cis-aconitate to yield (2R,3S)-2-methylisocitrate. The apo form of AcnA functions as a RNA-binding regulatory protein. The protein is Aconitate hydratase A (acn) of Francisella tularensis subsp. holarctica (strain LVS).